The primary structure comprises 138 residues: Large ribosomal subunit protein uL16 (138 aa).

Residues 1 to 18 (MALMPKRVKHRKSQRGRI) are compositionally biased toward basic residues. The interval 1-21 (MALMPKRVKHRKSQRGRIKGN) is disordered.

This sequence belongs to the universal ribosomal protein uL16 family. Part of the 50S ribosomal subunit.

In terms of biological role, binds 23S rRNA and is also seen to make contacts with the A and possibly P site tRNAs. This chain is Large ribosomal subunit protein uL16, found in Rhodopirellula baltica (strain DSM 10527 / NCIMB 13988 / SH1).